Reading from the N-terminus, the 632-residue chain is Probable potassium transport system protein Kup 3 (632 aa).

The next 12 membrane-spanning stretches (helical) occupy residues leucine 17–leucine 37, leucine 60–leucine 80, threonine 106–isoleucine 126, proline 144–valine 164, phenylalanine 175–isoleucine 195, alanine 210–leucine 230, tryptophan 254–leucine 274, alanine 292–isoleucine 312, isoleucine 344–phenylalanine 364, leucine 370–phenylalanine 390, leucine 401–alanine 421, and isoleucine 426–threonine 446.

The protein belongs to the HAK/KUP transporter (TC 2.A.72) family.

Its subcellular location is the cell inner membrane. It carries out the reaction K(+)(in) + H(+)(in) = K(+)(out) + H(+)(out). Its function is as follows. Transport of potassium into the cell. Likely operates as a K(+):H(+) symporter. In Rhizobium etli (strain ATCC 51251 / DSM 11541 / JCM 21823 / NBRC 15573 / CFN 42), this protein is Probable potassium transport system protein Kup 3.